Reading from the N-terminus, the 220-residue chain is Large ribosomal subunit protein uL3 (220 aa).

The tract at residues 132–153 (SGRASHGNSRSHNVPGSIGMAQ) is disordered. Residues 133 to 145 (GRASHGNSRSHNV) are compositionally biased toward polar residues. Glutamine 153 carries the N5-methylglutamine modification.

Belongs to the universal ribosomal protein uL3 family. Part of the 50S ribosomal subunit. Forms a cluster with proteins L14 and L19. In terms of processing, methylated by PrmB.

Functionally, one of the primary rRNA binding proteins, it binds directly near the 3'-end of the 23S rRNA, where it nucleates assembly of the 50S subunit. This Ralstonia nicotianae (strain ATCC BAA-1114 / GMI1000) (Ralstonia solanacearum) protein is Large ribosomal subunit protein uL3.